The primary structure comprises 152 residues: Melatonin receptor type 1B (152 aa).

The Cytoplasmic segment spans residues 1–12 (HSFVYEKLFSLW). The chain crosses the membrane as a helical span at residues 13-33 (NTILYVCLIWTLTVVATVPNF). The Extracellular segment spans residues 34-57 (FVGSLEYDPRIYSCTFVQTVSSSY). Residues 58–78 (TITVVVIHFILPITVVTFCYL) form a helical membrane-spanning segment. At 79–110 (RIWILVIQVRRKVKSEFKPRMKQSDFRNFLTM) the chain is on the cytoplasmic side. The helical transmembrane segment at 111–131 (FVVFVIFAFCWAPLNFIGLAV) threads the bilayer. Residues 132–144 (SINPTEVAPKIPE) are Extracellular-facing. The chain crosses the membrane as a helical span at residues 145–152 (WLFVVSYF).

This sequence belongs to the G-protein coupled receptor 1 family.

It is found in the cell membrane. Functionally, high affinity receptor for melatonin. The activity of this receptor is mediated by pertussis toxin sensitive G proteins that inhibits adenylate cyclase activity. This is Melatonin receptor type 1B (mtnr1b) from Xenopus laevis (African clawed frog).